A 1767-amino-acid chain; its full sequence is Trans-Golgi network-localized SYP41-interacting protein 1 (1767 aa).

The interval 1 to 72 (MHEKDDLPQD…LTTDDDDNDD (72 aa)) is disordered. Residues 1–1748 (MHEKDDLPQD…RVLMSRPQAR (1748 aa)) lie on the Cytoplasmic side of the membrane. The segment covering 16-32 (IENDDESNGQEEEELDP) has biased composition (acidic residues). 5 coiled-coil regions span residues 276-436 (LSHL…MSTA), 493-516 (VRSL…LKDL), 570-590 (KSNI…MEET), 684-805 (VSNL…LQQS), and 845-1082 (IQEV…LSSK). Over residues 1177 to 1190 (DNSVNTEPENSQGS) the composition is skewed to polar residues. The segment at 1177-1198 (DNSVNTEPENSQGSAADEDEIS) is disordered. Coiled coils occupy residues 1251 to 1310 (NSSL…FQEN), 1362 to 1424 (IRDM…WHEK), 1522 to 1542 (LKKA…AKNE), and 1603 to 1630 (LAGS…KAIQ). Residues 1749–1766 (LGVMVYSLLLHLWLLASI) form a helical; Anchor for type IV membrane protein membrane-spanning segment. Leucine 1767 is a topological domain (vesicular).

In terms of assembly, interacts with SYP41. In terms of tissue distribution, expressed ubiquitously in roots, leaves and flowers, and, to a lower extent, in stems.

The protein resides in the golgi apparatus. The protein localises to the trans-Golgi network membrane. In terms of biological role, tethering factor involved in vesicle fusion at the trans-Golgi network (TGN) thus being required for efficient protein trafficking to the vacuole. Implicated in resistance to salt and osmotic stresses. Modulates the cell morphology (e.g. epidermal cell file rotation (CFR) and cell expansion) in mature regions of roots and the base of hypocotyls as well as root skewing, a process leading to root movement within the soil in order to maximize anchorage and nutrient acquisition, probably by regulating microtubule stabilization independently of their orientation. The chain is Trans-Golgi network-localized SYP41-interacting protein 1 from Arabidopsis thaliana (Mouse-ear cress).